We begin with the raw amino-acid sequence, 479 residues long: 5-hydroxytryptamine receptor 2B (479 aa).

Residues Met-1–Trp-55 lie on the Extracellular side of the membrane. A helical transmembrane segment spans residues Ala-56–Val-78. At Ser-79 to Asn-89 the chain is on the cytoplasmic side. The helical transmembrane segment at Tyr-90–Leu-112 threads the bilayer. Residues Thr-113–Pro-128 lie on the Extracellular side of the membrane. Residues Cys-127 and Cys-206 are joined by a disulfide bond. A helical membrane pass occupies residues Ala-129 to Leu-150. Positions 134 and 139 each coordinate ergotamine. The short motif at Asp-151–Tyr-153 is the DRY motif; important for ligand-induced conformation changes element. At Asp-151–Thr-170 the chain is on the cytoplasmic side. A helical transmembrane segment spans residues Ala-171–Ile-191. Topologically, residues Lys-192–Ser-215 are extracellular. Asn-203 carries an N-linked (GlcNAc...) asparagine glycan. Ergotamine is bound at residue Leu-208. A [DE]RFG motif; may stabilize a conformation that preferentially activates signaling via beta-arrestin family members motif is present at residues Asp-211–Gly-214. Residues Phe-216–Leu-238 form a helical membrane-spanning segment. Residues Thr-239–Lys-323 lie on the Cytoplasmic side of the membrane. The chain crosses the membrane as a helical span at residues Val-324–Val-344. Topologically, residues Thr-345–Thr-359 are extracellular. A disulfide bond links Cys-349 and Cys-352. N-linked (GlcNAc...) asparagine glycosylation is present at Asn-353. A helical membrane pass occupies residues Leu-360 to Leu-381. The NPxxY motif; important for ligand-induced conformation changes and signaling motif lies at Asn-375–Tyr-379. The Cytoplasmic portion of the chain corresponds to Phe-382–Ile-479. Residue Cys-396 is the site of S-palmitoyl cysteine attachment. The short motif at Ser-477–Ile-479 is the PDZ-binding element.

This sequence belongs to the G-protein coupled receptor 1 family. Interacts (via C-terminus) with MPDZ. In terms of tissue distribution, stomach fundus.

The protein localises to the cell membrane. Its subcellular location is the synapse. It localises to the synaptosome. In terms of biological role, G-protein coupled receptor for 5-hydroxytryptamine (serotonin). Also functions as a receptor for various ergot alkaloid derivatives and psychoactive substances. Ligand binding causes a conformation change that triggers signaling via guanine nucleotide-binding proteins (G proteins) and modulates the activity of downstream effectors. HTR2B is coupled to G(q)/G(11) G alpha proteins and activates phospholipase C-beta, releasing diacylglycerol (DAG) and inositol 1,4,5-trisphosphate (IP3) second messengers that modulate the activity of phosphatidylinositol 3-kinase and promote the release of Ca(2+) ions from intracellular stores, respectively. Beta-arrestin family members inhibit signaling via G proteins and mediate activation of alternative signaling pathways. Plays a role in the regulation of dopamine and 5-hydroxytryptamine release, 5-hydroxytryptamine uptake and in the regulation of extracellular dopamine and 5-hydroxytryptamine levels, and thereby affects neural activity. May play a role in the perception of pain. Plays a role in the regulation of behavior, including impulsive behavior. Required for normal proliferation of embryonic cardiac myocytes and normal heart development. Protects cardiomyocytes against apoptosis. Plays a role in the adaptation of pulmonary arteries to chronic hypoxia. Plays a role in vasoconstriction. Required for normal osteoblast function and proliferation, and for maintaining normal bone density. Required for normal proliferation of the interstitial cells of Cajal in the intestine. The chain is 5-hydroxytryptamine receptor 2B (Htr2b) from Rattus norvegicus (Rat).